A 246-amino-acid chain; its full sequence is Polyhedrin (246 aa).

Belongs to the polyhedrin family.

Functionally, major component of the virus occlusion bodies, which are large proteinaceous structures (polyhedra), that protect the virus from the outside environment for extended periods until they are ingested by insect larvae. In Lepidoptera (butterflies and moths), this protein is Polyhedrin (PH).